The chain runs to 362 residues: uncharacterized protein (362 aa).

The protein belongs to the carbohydrate kinase PfkB family.

This is an uncharacterized protein from Escherichia coli (strain K12).